Reading from the N-terminus, the 357-residue chain is Trans-enoyl reductase resD (357 aa).

Tyr-211 contributes to the NADP(+) binding site.

Belongs to the zinc-containing alcohol dehydrogenase family.

Its pathway is antifungal biosynthesis. Its function is as follows. Trans-enoyl reductase; part of the gene cluster that mediates the biosynthesis of the tetrahydropyranyl antifungal agent restricticin that acts as an inhibitor of CYP51 and blocks the ergosterol biosynthesis. The highly reducing polyketide synthase resH, the short chain dehydrogenase resG, the cyclase resF, the FAD-dependent monooxygenase resA and the enoylreductase resD are required to generate the first stable intermediate desmethylrestrictinol. ResH with resD biosynthesize the first polyketide chain intermediate that is reduced by resG, followed by epoxidation by resA before 6-endo cyclization via epoxide opening by resF leads to desmethylrestrictinol. The methyltransferase resE then catalyzes the C4 O-methylation of desmethylrestrictinol to produce restrictinol, and the nonribosomal peptide synthetase resC catalyzes the C3 esterification of restrictinol with glycine that leads to restricticin. This is Trans-enoyl reductase resD from Aspergillus sclerotiorum.